The primary structure comprises 182 residues: Probable RNA 2'-phosphotransferase (182 aa).

It belongs to the KptA/TPT1 family.

Removes the 2'-phosphate from RNA via an intermediate in which the phosphate is ADP-ribosylated by NAD followed by a presumed transesterification to release the RNA and generate ADP-ribose 1''-2''-cyclic phosphate (APPR&gt;P). May function as an ADP-ribosylase. This Herpetosiphon aurantiacus (strain ATCC 23779 / DSM 785 / 114-95) protein is Probable RNA 2'-phosphotransferase.